We begin with the raw amino-acid sequence, 98 residues long: Co-chaperonin GroES (98 aa).

This sequence belongs to the GroES chaperonin family. Heptamer of 7 subunits arranged in a ring. Interacts with the chaperonin GroEL.

Its subcellular location is the cytoplasm. Together with the chaperonin GroEL, plays an essential role in assisting protein folding. The GroEL-GroES system forms a nano-cage that allows encapsulation of the non-native substrate proteins and provides a physical environment optimized to promote and accelerate protein folding. GroES binds to the apical surface of the GroEL ring, thereby capping the opening of the GroEL channel. This is Co-chaperonin GroES from Leifsonia xyli subsp. xyli (strain CTCB07).